The following is a 135-amino-acid chain: Early nodulin-5 (135 aa).

A signal peptide spans 1-23 (MASSSSPIFLMIIFSMWLLFSYS).

In terms of tissue distribution, invasion zone and early symbiotic zone.

Its function is as follows. Involved in the infection process during the plant-rhizobium interaction. This chain is Early nodulin-5 (ENOD5), found in Pisum sativum (Garden pea).